The primary structure comprises 501 residues: ATP synthase subunit alpha (501 aa).

169-176 provides a ligand contact to ATP; that stretch reads GDRQTGKT.

Belongs to the ATPase alpha/beta chains family. As to quaternary structure, F-type ATPases have 2 components, CF(1) - the catalytic core - and CF(0) - the membrane proton channel. CF(1) has five subunits: alpha(3), beta(3), gamma(1), delta(1), epsilon(1). CF(0) has three main subunits: a(1), b(2) and c(9-12). The alpha and beta chains form an alternating ring which encloses part of the gamma chain. CF(1) is attached to CF(0) by a central stalk formed by the gamma and epsilon chains, while a peripheral stalk is formed by the delta and b chains.

The protein resides in the cell membrane. The catalysed reaction is ATP + H2O + 4 H(+)(in) = ADP + phosphate + 5 H(+)(out). Produces ATP from ADP in the presence of a proton gradient across the membrane. The alpha chain is a regulatory subunit. This Streptococcus mutans serotype c (strain ATCC 700610 / UA159) protein is ATP synthase subunit alpha.